The following is a 95-amino-acid chain: Aspartyl/glutamyl-tRNA(Asn/Gln) amidotransferase subunit C (95 aa).

This sequence belongs to the GatC family. In terms of assembly, heterotrimer of A, B and C subunits.

It carries out the reaction L-glutamyl-tRNA(Gln) + L-glutamine + ATP + H2O = L-glutaminyl-tRNA(Gln) + L-glutamate + ADP + phosphate + H(+). The catalysed reaction is L-aspartyl-tRNA(Asn) + L-glutamine + ATP + H2O = L-asparaginyl-tRNA(Asn) + L-glutamate + ADP + phosphate + 2 H(+). Functionally, allows the formation of correctly charged Asn-tRNA(Asn) or Gln-tRNA(Gln) through the transamidation of misacylated Asp-tRNA(Asn) or Glu-tRNA(Gln) in organisms which lack either or both of asparaginyl-tRNA or glutaminyl-tRNA synthetases. The reaction takes place in the presence of glutamine and ATP through an activated phospho-Asp-tRNA(Asn) or phospho-Glu-tRNA(Gln). This chain is Aspartyl/glutamyl-tRNA(Asn/Gln) amidotransferase subunit C, found in Pseudomonas entomophila (strain L48).